We begin with the raw amino-acid sequence, 174 residues long: Keratin-associated protein 9-2 (174 aa).

Repeat copies occupy residues 8–12 (CCQPT), 13–17 (CCRTT), 18–22 (CCRTT), 37–41 (CCQPA), 42–46 (CCVSS), 51–55 (CCRPT), 61–65 (CCRTT), 66–70 (CCQPT), 75–79 (CCQPS), 80–84 (CCSTP), 85–89 (CCQPT), 90–94 (CCGSS), 95–99 (CCGQT), 144–148 (CCRPA), 149–153 (CCETT), 154–158 (CCRTT), and 168–172 (CCQPS). The 17 X 5 AA repeats of C-C-[RQVSGE]-[SPTQ]-[TASP] stretch occupies residues 8-172 (CCQPTCCRTT…TCVSSCCQPS (165 aa)).

Belongs to the KRTAP type 9 family. As to quaternary structure, interacts with hair keratins.

In the hair cortex, hair keratin intermediate filaments are embedded in an interfilamentous matrix, consisting of hair keratin-associated proteins (KRTAP), which are essential for the formation of a rigid and resistant hair shaft through their extensive disulfide bond cross-linking with abundant cysteine residues of hair keratins. The matrix proteins include the high-sulfur and high-glycine-tyrosine keratins. The sequence is that of Keratin-associated protein 9-2 (KRTAP9-2) from Homo sapiens (Human).